Reading from the N-terminus, the 152-residue chain is Deoxyuridine 5'-triphosphate nucleotidohydrolase (152 aa).

Substrate-binding positions include 65 to 67 (RSG), Asn78, and 82 to 84 (TID).

The protein belongs to the dUTPase family. Requires Mg(2+) as cofactor.

It carries out the reaction dUTP + H2O = dUMP + diphosphate + H(+). Its pathway is pyrimidine metabolism; dUMP biosynthesis; dUMP from dCTP (dUTP route): step 2/2. In terms of biological role, this enzyme is involved in nucleotide metabolism: it produces dUMP, the immediate precursor of thymidine nucleotides and it decreases the intracellular concentration of dUTP so that uracil cannot be incorporated into DNA. This is Deoxyuridine 5'-triphosphate nucleotidohydrolase from Chlorobaculum tepidum (strain ATCC 49652 / DSM 12025 / NBRC 103806 / TLS) (Chlorobium tepidum).